Consider the following 165-residue polypeptide: Cyclic pyranopterin monophosphate synthase (165 aa).

Residues 75 to 77 (MCH) and 115 to 116 (ME) each bind substrate. D130 is a catalytic residue.

It belongs to the MoaC family. As to quaternary structure, homohexamer; trimer of dimers.

The enzyme catalyses (8S)-3',8-cyclo-7,8-dihydroguanosine 5'-triphosphate = cyclic pyranopterin phosphate + diphosphate. It participates in cofactor biosynthesis; molybdopterin biosynthesis. In terms of biological role, catalyzes the conversion of (8S)-3',8-cyclo-7,8-dihydroguanosine 5'-triphosphate to cyclic pyranopterin monophosphate (cPMP). This chain is Cyclic pyranopterin monophosphate synthase, found in Halalkalibacterium halodurans (strain ATCC BAA-125 / DSM 18197 / FERM 7344 / JCM 9153 / C-125) (Bacillus halodurans).